We begin with the raw amino-acid sequence, 242 residues long: UDP-2,3-diacylglucosamine hydrolase (242 aa).

Mn(2+) is bound by residues D7, H9, D40, N78, and H113. Residue 78-79 (NR) coordinates substrate. Substrate is bound by residues D121, S159, T163, K166, and H194. Residues H194 and H196 each contribute to the Mn(2+) site.

This sequence belongs to the LpxH family. Requires Mn(2+) as cofactor.

It localises to the cell inner membrane. The enzyme catalyses UDP-2-N,3-O-bis[(3R)-3-hydroxytetradecanoyl]-alpha-D-glucosamine + H2O = 2-N,3-O-bis[(3R)-3-hydroxytetradecanoyl]-alpha-D-glucosaminyl 1-phosphate + UMP + 2 H(+). It functions in the pathway glycolipid biosynthesis; lipid IV(A) biosynthesis; lipid IV(A) from (3R)-3-hydroxytetradecanoyl-[acyl-carrier-protein] and UDP-N-acetyl-alpha-D-glucosamine: step 4/6. In terms of biological role, hydrolyzes the pyrophosphate bond of UDP-2,3-diacylglucosamine to yield 2,3-diacylglucosamine 1-phosphate (lipid X) and UMP by catalyzing the attack of water at the alpha-P atom. Involved in the biosynthesis of lipid A, a phosphorylated glycolipid that anchors the lipopolysaccharide to the outer membrane of the cell. The protein is UDP-2,3-diacylglucosamine hydrolase of Ectopseudomonas mendocina (strain ymp) (Pseudomonas mendocina).